We begin with the raw amino-acid sequence, 454 residues long: MSHNDTIVAQATPPGRGGVGILRISGLNAKKVAQTVLGKLPKPRYADYLPFKDADGATLDQGIALWFPGPNSFTGEDVLELQGHGGPVILDLLLKRILTIPGVRIARPGEFSERAFLNDKLDLAQAEAIADLIDASSEQAARSALNSLQGAFSARVNHLVEALTHLRIYVEAAIDFPDEEIDFLSDGKIEAQLNGVIADLDAVRAEARQGSLLREGMKVVIAGRPNAGKSSLLNALAGREAAIVTDIAGTTRDVLREHIHIDGMPLHVIDTAGLRDASDEVERIGIERAWQEIEQADRVLFMVDGTTTDAVDPGDIWPDFIARLPKNLPITVVRNKADITGEMLGISEVNGHSLVRLSARTGEGVDVLRNHLKQSMGFDTNMEGGFLARRRHLQALAEAAEHLEQGKAQLLGAWAGELLAEELRLAQQSLSEITGEFTSDDLLGRIFSSFCIGK.

Residues Arg-23, Glu-80, and Lys-120 each contribute to the (6S)-5-formyl-5,6,7,8-tetrahydrofolate site. In terms of domain architecture, TrmE-type G spans 216 to 377 (GMKVVIAGRP…LRNHLKQSMG (162 aa)). Position 226 (Asn-226) interacts with K(+). GTP is bound by residues 226–231 (NAGKSS), 245–251 (TDIAGTT), 270–273 (DTAG), 335–338 (NKAD), and 358–360 (SAR). Ser-230 is a Mg(2+) binding site. 3 residues coordinate K(+): Thr-245, Ile-247, and Thr-250. A Mg(2+)-binding site is contributed by Thr-251. Lys-454 serves as a coordination point for (6S)-5-formyl-5,6,7,8-tetrahydrofolate.

The protein belongs to the TRAFAC class TrmE-Era-EngA-EngB-Septin-like GTPase superfamily. TrmE GTPase family. As to quaternary structure, homodimer. Heterotetramer of two MnmE and two MnmG subunits. K(+) is required as a cofactor.

The protein localises to the cytoplasm. In terms of biological role, exhibits a very high intrinsic GTPase hydrolysis rate. Involved in the addition of a carboxymethylaminomethyl (cmnm) group at the wobble position (U34) of certain tRNAs, forming tRNA-cmnm(5)s(2)U34. This Salmonella arizonae (strain ATCC BAA-731 / CDC346-86 / RSK2980) protein is tRNA modification GTPase MnmE.